Reading from the N-terminus, the 421-residue chain is Plant UBX domain-containing protein 5 (421 aa).

The 42-residue stretch at 4-45 (ETNENLINSFIEITSSSREEANFFLESHTWNLDAAVSTFLDN) folds into the UBA domain. Disordered regions lie at residues 46-171 (DAAA…MMVQ) and 292-338 (ENFT…PSRG). Over residues 69–84 (QSPSQSHSPDYTPSET) the composition is skewed to polar residues. Residues 85–102 (SPSPSRSRSASPSSRAAP) show a composition bias toward low complexity. Residues 231–295 (RIMHTITFWL…DLVRRGENFT (65 aa)) form the SEP domain. Residues 312 to 328 (GASGSGSSSAPQASSAP) are compositionally biased toward low complexity. Positions 343–420 (PAAPTTSIQL…GIANAVVIQK (78 aa)) constitute a UBX domain.

Interacts with CDC48A (non-hexameric) via its UBX domain.

The chain is Plant UBX domain-containing protein 5 from Arabidopsis thaliana (Mouse-ear cress).